A 311-amino-acid chain; its full sequence is Ribosomal RNA small subunit methyltransferase H (311 aa).

S-adenosyl-L-methionine is bound by residues 41–43 (GGH), Asp61, Phe85, Asp102, and Gln109.

Belongs to the methyltransferase superfamily. RsmH family.

It localises to the cytoplasm. The enzyme catalyses cytidine(1402) in 16S rRNA + S-adenosyl-L-methionine = N(4)-methylcytidine(1402) in 16S rRNA + S-adenosyl-L-homocysteine + H(+). Its function is as follows. Specifically methylates the N4 position of cytidine in position 1402 (C1402) of 16S rRNA. The chain is Ribosomal RNA small subunit methyltransferase H from Paracidovorax citrulli (strain AAC00-1) (Acidovorax citrulli).